Consider the following 39-residue polypeptide: Photosystem II reaction center protein J (39 aa).

Residues 7–27 traverse the membrane as a helical segment; the sequence is IPLWLVATIGGIAVLTVLGLF.

Belongs to the PsbJ family. PSII is composed of 1 copy each of membrane proteins PsbA, PsbB, PsbC, PsbD, PsbE, PsbF, PsbH, PsbI, PsbJ, PsbK, PsbL, PsbM, PsbT, PsbX, PsbY, PsbZ, Psb30/Ycf12, at least 3 peripheral proteins of the oxygen-evolving complex and a large number of cofactors. It forms dimeric complexes.

It is found in the plastid. The protein resides in the chloroplast thylakoid membrane. One of the components of the core complex of photosystem II (PSII). PSII is a light-driven water:plastoquinone oxidoreductase that uses light energy to abstract electrons from H(2)O, generating O(2) and a proton gradient subsequently used for ATP formation. It consists of a core antenna complex that captures photons, and an electron transfer chain that converts photonic excitation into a charge separation. The chain is Photosystem II reaction center protein J from Cyanidioschyzon merolae (strain NIES-3377 / 10D) (Unicellular red alga).